Reading from the N-terminus, the 724-residue chain is RNA-directed RNA polymerase (724 aa).

One can recognise a RdRp catalytic domain in the interval 424-540 (PVAVGLDASR…VCEKADLKKL (117 aa)).

Belongs to the tombusviridae RNA polymerase family.

The enzyme catalyses RNA(n) + a ribonucleoside 5'-triphosphate = RNA(n+1) + diphosphate. In terms of biological role, RNA-dependent RNA polymerase that plays an essential role in the virus replication. This is RNA-directed RNA polymerase from Tobacco necrosis virus (strain A) (TNV-A).